Reading from the N-terminus, the 324-residue chain is Fibronectin type III domain-containing protein 8 (324 aa).

The 102-residue stretch at 179–280 folds into the Fibronectin type-III domain; the sequence is PDTPFIFEHT…KPYKFATLAT (102 aa).

This chain is Fibronectin type III domain-containing protein 8 (FNDC8), found in Homo sapiens (Human).